The following is a 35-amino-acid chain: Jingzhaotoxin F5-21.66 (35 aa).

Cystine bridges form between Cys2-Cys16, Cys9-Cys21, and Cys15-Cys29.

Belongs to the neurotoxin 10 (Hwtx-1) family. 48 (Jztx-F5) subfamily. As to expression, expressed by the venom gland.

The protein resides in the secreted. In terms of biological role, probable ion channel inhibitor. This is Jingzhaotoxin F5-21.66 from Chilobrachys guangxiensis (Chinese earth tiger tarantula).